A 220-amino-acid polypeptide reads, in one-letter code: 5'(3')-deoxyribonucleotidase, mitochondrial (220 aa).

A mitochondrion-targeting transit peptide spans 1-23 (MHRLRGCCARPRGAPLRAERSRA). Residue Asp33 is the Nucleophile of the active site. Mg(2+) is bound by residues Asp33 and Asp35. The active-site Proton donor is the Asp35. Positions 35, 41, 67, 68, 69, 88, 122, and 157 each coordinate substrate. Asp168 provides a ligand contact to Mg(2+).

This sequence belongs to the 5'(3')-deoxyribonucleotidase family. As to quaternary structure, homodimer. The cofactor is Mg(2+).

It localises to the mitochondrion. In terms of biological role, dephosphorylates specifically the 5' and 2'(3')-phosphates of uracil and thymine deoxyribonucleotides, and so protects mitochondrial DNA replication from excess dTTP. Has only marginal activity towards dIMP and dGMP. In Mus musculus (Mouse), this protein is 5'(3')-deoxyribonucleotidase, mitochondrial (Nt5m).